Reading from the N-terminus, the 307-residue chain is Zygote arrest protein 2.L (307 aa).

The segment at 138 to 200 (LPQGGRLPKK…EEPGNEEQTK (63 aa)) is disordered. Residues 156-186 (LKERAPSPEDKEREKVSEKEPDTKDELEKRP) show a composition bias toward basic and acidic residues. The segment at 208 to 293 (QKYGYFHCKD…QELCGRCKNK (86 aa)) adopts a 3CxxC-type zinc-finger fold.

It belongs to the ZAR1 family. In terms of tissue distribution, expressed in oocytes.

The protein resides in the cytoplasm. It localises to the cytoplasmic ribonucleoprotein granule. Its function is as follows. mRNA-binding protein required for maternal mRNA storage, translation and degradation during oocyte maturation. Probably promotes formation of some phase-separated membraneless compartment that stores maternal mRNAs in oocytes: acts by undergoing liquid-liquid phase separation upon binding to maternal mRNAs. Binds to the 3'-UTR of maternal mRNAs, inhibiting their translation. This is Zygote arrest protein 2.L (zar2.L) from Xenopus laevis (African clawed frog).